The primary structure comprises 353 residues: Probable peptide ABC transporter ATP-binding protein y4tS (353 aa).

One can recognise an ABC transporter domain in the interval 6-256 (LKVESLTKHY…PVHPYTEALI (251 aa)). ATP is bound at residue 49 to 56 (GESGCGKS).

This sequence belongs to the ABC transporter superfamily.

The protein resides in the cell inner membrane. Its function is as follows. Probably part of a binding-protein-dependent transport system y4tOPQRS for a peptide. Probably responsible for energy coupling to the transport system. The protein is Probable peptide ABC transporter ATP-binding protein y4tS of Sinorhizobium fredii (strain NBRC 101917 / NGR234).